The sequence spans 205 residues: Thiamine-phosphate synthase (205 aa).

Residues 37 to 41 (QVREK) and Asn-69 contribute to the 4-amino-2-methyl-5-(diphosphooxymethyl)pyrimidine site. 2 residues coordinate Mg(2+): Asp-70 and Asp-89. Ser-108 provides a ligand contact to 4-amino-2-methyl-5-(diphosphooxymethyl)pyrimidine. 2-[(2R,5Z)-2-carboxy-4-methylthiazol-5(2H)-ylidene]ethyl phosphate is bound at residue 134-136 (TGS). Lys-137 serves as a coordination point for 4-amino-2-methyl-5-(diphosphooxymethyl)pyrimidine. 2-[(2R,5Z)-2-carboxy-4-methylthiazol-5(2H)-ylidene]ethyl phosphate is bound by residues Gly-165 and 185–186 (IS).

Belongs to the thiamine-phosphate synthase family. It depends on Mg(2+) as a cofactor.

It catalyses the reaction 2-[(2R,5Z)-2-carboxy-4-methylthiazol-5(2H)-ylidene]ethyl phosphate + 4-amino-2-methyl-5-(diphosphooxymethyl)pyrimidine + 2 H(+) = thiamine phosphate + CO2 + diphosphate. The enzyme catalyses 2-(2-carboxy-4-methylthiazol-5-yl)ethyl phosphate + 4-amino-2-methyl-5-(diphosphooxymethyl)pyrimidine + 2 H(+) = thiamine phosphate + CO2 + diphosphate. The catalysed reaction is 4-methyl-5-(2-phosphooxyethyl)-thiazole + 4-amino-2-methyl-5-(diphosphooxymethyl)pyrimidine + H(+) = thiamine phosphate + diphosphate. Its pathway is cofactor biosynthesis; thiamine diphosphate biosynthesis; thiamine phosphate from 4-amino-2-methyl-5-diphosphomethylpyrimidine and 4-methyl-5-(2-phosphoethyl)-thiazole: step 1/1. Its function is as follows. Condenses 4-methyl-5-(beta-hydroxyethyl)thiazole monophosphate (THZ-P) and 2-methyl-4-amino-5-hydroxymethyl pyrimidine pyrophosphate (HMP-PP) to form thiamine monophosphate (TMP). This Clostridium botulinum (strain ATCC 19397 / Type A) protein is Thiamine-phosphate synthase.